The following is a 373-amino-acid chain: Deoxyguanosinetriphosphate triphosphohydrolase-like protein 1 (373 aa).

A disordered region spans residues 21-43 (RSSEARRAVPEAPSETRTAYQKD). An HD domain is found at 76–198 (RLTHTLEVQQ…VDAADALAYT (123 aa)).

The protein belongs to the dGTPase family. Type 2 subfamily.

The polypeptide is Deoxyguanosinetriphosphate triphosphohydrolase-like protein 1 (Deinococcus radiodurans (strain ATCC 13939 / DSM 20539 / JCM 16871 / CCUG 27074 / LMG 4051 / NBRC 15346 / NCIMB 9279 / VKM B-1422 / R1)).